A 236-amino-acid chain; its full sequence is MQTSIDPVFAGWDGSVAQARQLQQQLAQRVALRDEVSAAPALLAGFDVGFEDEGQTTRAAAVLLDAQTLLPLETHVARVPTSMPYVPGLLSFRELPALLRALALLSRTPDLVFIDGQGIAHPRRFGIAAHFGVVTGLPSIGVAKQRLAGTFIEPGGERGDHSPILLAGAQIGWALRSKPRCNPLIVSPGHRVSMQGALDWTLRTLRAYRLPEPTRLADRLASRRGEIELQTQPTLL.

Asp-47 and Asp-115 together coordinate Mg(2+).

This sequence belongs to the endonuclease V family. It depends on Mg(2+) as a cofactor.

Its subcellular location is the cytoplasm. The catalysed reaction is Endonucleolytic cleavage at apurinic or apyrimidinic sites to products with a 5'-phosphate.. Its function is as follows. DNA repair enzyme involved in the repair of deaminated bases. Selectively cleaves double-stranded DNA at the second phosphodiester bond 3' to a deoxyinosine leaving behind the intact lesion on the nicked DNA. The protein is Endonuclease V of Xanthomonas campestris pv. campestris (strain B100).